Reading from the N-terminus, the 240-residue chain is Short palate, lung and nasal epithelium carcinoma-associated protein 2B (240 aa).

The signal sequence occupies residues methionine 1 to alanine 19. Cysteine 163 and cysteine 206 are disulfide-bonded.

Belongs to the BPI/LBP/Plunc superfamily. Plunc family. In terms of tissue distribution, parotid glands.

It localises to the secreted. The polypeptide is Short palate, lung and nasal epithelium carcinoma-associated protein 2B (SPLUNC2B) (Bos taurus (Bovine)).